A 272-amino-acid polypeptide reads, in one-letter code: HMP-PP phosphatase (272 aa).

Catalysis depends on aspartate 8, which acts as the Nucleophile. The Mg(2+) site is built by aspartate 8, aspartate 10, and aspartate 212.

Belongs to the HAD-like hydrolase superfamily. Cof family. Mg(2+) is required as a cofactor.

It catalyses the reaction 4-amino-2-methyl-5-(diphosphooxymethyl)pyrimidine + H2O = 4-amino-2-methyl-5-(phosphooxymethyl)pyrimidine + phosphate + H(+). Its function is as follows. Catalyzes the hydrolysis of 4-amino-2-methyl-5-hydroxymethylpyrimidine pyrophosphate (HMP-PP) to 4-amino-2-methyl-5-hydroxymethylpyrimidine phosphate (HMP-P). This is HMP-PP phosphatase from Escherichia coli O6:H1 (strain CFT073 / ATCC 700928 / UPEC).